A 367-amino-acid chain; its full sequence is N-acetylmuramoyl-L-alanine amidase BlyA (367 aa).

An N-acetylmuramoyl-L-alanine amidase domain is found at 24–158 (VKKCVLHYTA…DITHKNCPAP (135 aa)). The interval 178–204 (SGKSVSKASPTKPTTSSPSSSSAVSGS) is disordered. Positions 180–204 (KSVSKASPTKPTTSSPSSSSAVSGS) are enriched in low complexity. SH3b domains follow at residues 202-271 (SGSL…YVDV) and 298-367 (GKIK…GSTI).

This sequence belongs to the N-acetylmuramoyl-L-alanine amidase 2 family.

The protein resides in the secreted. The enzyme catalyses Hydrolyzes the link between N-acetylmuramoyl residues and L-amino acid residues in certain cell-wall glycopeptides.. Autolysins are involved in some important biological processes such as cell separation, cell-wall turnover, competence for genetic transformation, formation of the flagella and sporulation. Involved in prophage SP-beta-mediated cell lysis. The protein is N-acetylmuramoyl-L-alanine amidase BlyA (blyA) of Bacillus subtilis (strain 168).